Reading from the N-terminus, the 301-residue chain is Ornithine carbamoyltransferase (301 aa).

Carbamoyl phosphate contacts are provided by residues Arg-100 and 127–130 (HPCQ). Residues Asn-158, Asp-221, and 225–226 (SM) contribute to the L-ornithine site. Residues 260–261 (CL) and Arg-288 each bind carbamoyl phosphate.

Belongs to the aspartate/ornithine carbamoyltransferase superfamily. OTCase family.

The protein localises to the cytoplasm. It catalyses the reaction carbamoyl phosphate + L-ornithine = L-citrulline + phosphate + H(+). Its pathway is amino-acid biosynthesis; L-arginine biosynthesis; L-arginine from L-ornithine and carbamoyl phosphate: step 1/3. Functionally, reversibly catalyzes the transfer of the carbamoyl group from carbamoyl phosphate (CP) to the N(epsilon) atom of ornithine (ORN) to produce L-citrulline. In Shewanella oneidensis (strain ATCC 700550 / JCM 31522 / CIP 106686 / LMG 19005 / NCIMB 14063 / MR-1), this protein is Ornithine carbamoyltransferase.